Reading from the N-terminus, the 293-residue chain is Ribosomal protein L11 methyltransferase (293 aa).

The S-adenosyl-L-methionine site is built by T145, G166, D188, and N230.

Belongs to the methyltransferase superfamily. PrmA family.

It localises to the cytoplasm. It carries out the reaction L-lysyl-[protein] + 3 S-adenosyl-L-methionine = N(6),N(6),N(6)-trimethyl-L-lysyl-[protein] + 3 S-adenosyl-L-homocysteine + 3 H(+). Methylates ribosomal protein L11. The chain is Ribosomal protein L11 methyltransferase from Shewanella piezotolerans (strain WP3 / JCM 13877).